We begin with the raw amino-acid sequence, 95 residues long: Aspartyl/glutamyl-tRNA(Asn/Gln) amidotransferase subunit C (95 aa).

This sequence belongs to the GatC family. As to quaternary structure, heterotrimer of A, B and C subunits.

The enzyme catalyses L-glutamyl-tRNA(Gln) + L-glutamine + ATP + H2O = L-glutaminyl-tRNA(Gln) + L-glutamate + ADP + phosphate + H(+). The catalysed reaction is L-aspartyl-tRNA(Asn) + L-glutamine + ATP + H2O = L-asparaginyl-tRNA(Asn) + L-glutamate + ADP + phosphate + 2 H(+). Its function is as follows. Allows the formation of correctly charged Asn-tRNA(Asn) or Gln-tRNA(Gln) through the transamidation of misacylated Asp-tRNA(Asn) or Glu-tRNA(Gln) in organisms which lack either or both of asparaginyl-tRNA or glutaminyl-tRNA synthetases. The reaction takes place in the presence of glutamine and ATP through an activated phospho-Asp-tRNA(Asn) or phospho-Glu-tRNA(Gln). In Nitrosospira multiformis (strain ATCC 25196 / NCIMB 11849 / C 71), this protein is Aspartyl/glutamyl-tRNA(Asn/Gln) amidotransferase subunit C.